The primary structure comprises 309 residues: MSHTETQTQQSHFGVDFLMGGVSAAIAKTGAAPIERVKLLMQNQEEMLKQGSLDTRYKGILDCFKRTATHEGIVSFWRGNTANVLRYFPTQALNFAFKDKIKSLLSYDRERDGYAKWFAGNLFSGGAAGGLSLLFVYSLDYARTRLAADARGSKSTSQRQFNGLLDVYKKTLKTDGLLGLYRGFVPSVLGIIVYRGLYFGLYDSFKPVLLTGALEGSFVASFLLGWVITMGASTASYPLDTVRRRMMMTSGQTIKYDGALDCLRKIVQKEGAYSLFKGCGANIFRGVAAAGVISLYDQLQLIMFGKKFK.

Solcar repeat units lie at residues 11-104 (SHFG…IKSL), 116-208 (KWFA…FKPV), and 216-302 (GSFV…LQLI). The next 5 membrane-spanning stretches (helical) occupy residues 13 to 40 (FGVD…VKLL), 81 to 105 (TANV…KSLL), 114 to 134 (YAKW…LSLL), 184 to 205 (FVPS…YDSF), and 219 to 239 (VASF…SYPL). ADP is bound by residues R86 and K98. R243 provides a ligand contact to ADP. Residues 243–248 (RRRMMM) form an important for transport activity region. Positions 243–248 (RRRMMM) match the Nucleotide carrier signature motif motif. A helical membrane pass occupies residues 279 to 299 (CGANIFRGVAAAGVISLYDQL).

The protein belongs to the mitochondrial carrier (TC 2.A.29) family. In terms of assembly, monomer.

Its subcellular location is the mitochondrion inner membrane. The catalysed reaction is ADP(in) + ATP(out) = ADP(out) + ATP(in). The matrix-open state (m-state) is inhibited by the membrane-permeable bongkrekic acid (BKA). The cytoplasmic-open state (c-state) is inhibited by the membrane-impermeable toxic inhibitor carboxyatractyloside (CATR). Functionally, ADP:ATP antiporter that mediates import of ADP into the mitochondrial matrix for ATP synthesis, and export of ATP out to fuel the cell. Cycles between the cytoplasmic-open state (c-state) and the matrix-open state (m-state): operates by the alternating access mechanism with a single substrate-binding site intermittently exposed to either the cytosolic (c-state) or matrix (m-state) side of the inner mitochondrial membrane. The sequence is that of ADP,ATP carrier protein 1 (AAC1) from Saccharomyces cerevisiae (strain ATCC 204508 / S288c) (Baker's yeast).